The primary structure comprises 238 residues: ATP synthase subunit a (238 aa).

The next 5 helical transmembrane spans lie at L18–A38, Y76–F96, N114–V134, S166–V186, and V193–I213.

It belongs to the ATPase A chain family. As to quaternary structure, F-type ATPases have 2 components, CF(1) - the catalytic core - and CF(0) - the membrane proton channel. CF(1) has five subunits: alpha(3), beta(3), gamma(1), delta(1), epsilon(1). CF(0) has three main subunits: a(1), b(2) and c(9-12). The alpha and beta chains form an alternating ring which encloses part of the gamma chain. CF(1) is attached to CF(0) by a central stalk formed by the gamma and epsilon chains, while a peripheral stalk is formed by the delta and b chains.

The protein localises to the cell membrane. Its function is as follows. Key component of the proton channel; it plays a direct role in the translocation of protons across the membrane. In Streptococcus pyogenes serotype M1, this protein is ATP synthase subunit a.